Consider the following 456-residue polypeptide: Bifunctional protein GlmU (456 aa).

The segment at 1–229 (MSNSSMSVVI…LSEVEGVNNR (229 aa)) is pyrophosphorylase. UDP-N-acetyl-alpha-D-glucosamine is bound by residues 11 to 14 (LAAG), lysine 25, glutamine 76, 81 to 82 (GT), 103 to 105 (YGD), glycine 140, glutamate 154, asparagine 169, and asparagine 227. Residue aspartate 105 participates in Mg(2+) binding. Asparagine 227 is a binding site for Mg(2+). The linker stretch occupies residues 230 to 250 (LQLAALERVYQSEQAEKLLLA). Positions 251 to 456 (GVMLLDPARF…QGWQRPIKKK (206 aa)) are N-acetyltransferase. The UDP-N-acetyl-alpha-D-glucosamine site is built by arginine 333 and lysine 351. Catalysis depends on histidine 363, which acts as the Proton acceptor. Tyrosine 366 and asparagine 377 together coordinate UDP-N-acetyl-alpha-D-glucosamine. Acetyl-CoA is bound by residues alanine 380, 386–387 (NY), serine 405, alanine 423, and arginine 440.

It in the N-terminal section; belongs to the N-acetylglucosamine-1-phosphate uridyltransferase family. In the C-terminal section; belongs to the transferase hexapeptide repeat family. In terms of assembly, homotrimer. It depends on Mg(2+) as a cofactor.

Its subcellular location is the cytoplasm. It catalyses the reaction alpha-D-glucosamine 1-phosphate + acetyl-CoA = N-acetyl-alpha-D-glucosamine 1-phosphate + CoA + H(+). The enzyme catalyses N-acetyl-alpha-D-glucosamine 1-phosphate + UTP + H(+) = UDP-N-acetyl-alpha-D-glucosamine + diphosphate. It functions in the pathway nucleotide-sugar biosynthesis; UDP-N-acetyl-alpha-D-glucosamine biosynthesis; N-acetyl-alpha-D-glucosamine 1-phosphate from alpha-D-glucosamine 6-phosphate (route II): step 2/2. It participates in nucleotide-sugar biosynthesis; UDP-N-acetyl-alpha-D-glucosamine biosynthesis; UDP-N-acetyl-alpha-D-glucosamine from N-acetyl-alpha-D-glucosamine 1-phosphate: step 1/1. Its pathway is bacterial outer membrane biogenesis; LPS lipid A biosynthesis. Functionally, catalyzes the last two sequential reactions in the de novo biosynthetic pathway for UDP-N-acetylglucosamine (UDP-GlcNAc). The C-terminal domain catalyzes the transfer of acetyl group from acetyl coenzyme A to glucosamine-1-phosphate (GlcN-1-P) to produce N-acetylglucosamine-1-phosphate (GlcNAc-1-P), which is converted into UDP-GlcNAc by the transfer of uridine 5-monophosphate (from uridine 5-triphosphate), a reaction catalyzed by the N-terminal domain. The polypeptide is Bifunctional protein GlmU (Yersinia enterocolitica serotype O:8 / biotype 1B (strain NCTC 13174 / 8081)).